The chain runs to 833 residues: MWVAYSPIEGLTTEHSRLAEKYSLYLVKSTPYDIPLPVRPSGVPVLFVPGNAGSYRQIRSISDTCRELNEQYGGSEIDFFALDFNEAYSALHGRTLLDQAEYLNDAINYILQMYRDNGKDVSSVMLLGHSMGGVVSRLAISLDNYKPGTVTTIFTLASPHLVPPATFDGDIQKVYNRMNDFWRSNYADSDNNSLSDMTVLSIAGGKRDTMVPSDYISLDSVVPSSHGLSTFSNSINRVWTGIDHDAMMWCHQLRRQIAIALMNVIDRDVNGRMEVFRKVFSGTQTLSDAEEDFEDVEVTPVKHGLHQKLESGWYYGENVQVMTTHTVNQESAFESYEMSSGSLLRAFECRSKSGSSFKGCRKIFPLLVPGSNDAVIAFAETEHYLLLDVSSSSDWISIDQVSQKSASFDFVTGATISTSNTISTDISFPKLTSGLVSYKVSVSKGVQLVRQYVQQNSSRVYDSKYLVPHNGVVDVSFHGDVPFVPYFQSSPLHLQVFGGGHVTIRVDWIGSLGNLFMRYRILFISLPSAILYAIFLVQFHAGTARFLSLRQSTSIFINRYLLTSCLAGSGIAYLTGLSQVRDFLHLIQIPITKTFAVDPSYTKNDLFLGLSGVSGTVLAPIFTVFSTGMVVLITELVMGLTSLLSFCFKSTTTAQSESESGDPISDLLHKRTVFVAVISVLVLLFFPYQLAFTLATVALLVMTAYFKSNKAPQEQSFNNYISTICVLMTWTCIINAPVLAVWIQGIVVQRSMTFSSHHNLVSILPTLLFVENLSFRRIPSGSSITSLLLAYTSLHCLFYGMMQAFMIHHGFNLLATWLLCMSYKKVFFKSKHE.

Ser-130 is a catalytic residue. Asn-191 and Asn-456 each carry an N-linked (GlcNAc...) asparagine glycan. A run of 5 helical transmembrane segments spans residues 521 to 541 (ILFI…QFHA), 560 to 580 (YLLT…LSQV), 617 to 637 (VLAP…TELV), 672 to 692 (TVFV…QLAF), and 723 to 743 (TICV…AVWI). The N-linked (GlcNAc...) asparagine glycan is linked to Asn-772. The chain crosses the membrane as a helical span at residues 787 to 807 (LLLAYTSLHCLFYGMMQAFMI).

It belongs to the GPI inositol-deacylase family.

It is found in the endoplasmic reticulum membrane. In terms of biological role, involved in inositol deacylation of GPI-anchored proteins which plays important roles in the quality control and ER-associated degradation of GPI-anchored proteins. This chain is Putative GPI inositol-deacylase C (BST1C), found in Yarrowia lipolytica (strain CLIB 122 / E 150) (Yeast).